We begin with the raw amino-acid sequence, 41 residues long: Large ribosomal subunit protein bL36 (41 aa).

The protein belongs to the bacterial ribosomal protein bL36 family.

The polypeptide is Large ribosomal subunit protein bL36 (Ruegeria pomeroyi (strain ATCC 700808 / DSM 15171 / DSS-3) (Silicibacter pomeroyi)).